A 230-amino-acid polypeptide reads, in one-letter code: Small ribosomal subunit protein uS3 (230 aa).

The 69-residue stretch at 39–107 (VRKFLEKKLE…PAQINIAEIR (69 aa)) folds into the KH type-2 domain.

This sequence belongs to the universal ribosomal protein uS3 family. Part of the 30S ribosomal subunit. Forms a tight complex with proteins S10 and S14.

In terms of biological role, binds the lower part of the 30S subunit head. Binds mRNA in the 70S ribosome, positioning it for translation. This chain is Small ribosomal subunit protein uS3, found in Shewanella amazonensis (strain ATCC BAA-1098 / SB2B).